The primary structure comprises 322 residues: Homoserine kinase (322 aa).

107–117 (PLSSGMGGSAA) contributes to the ATP binding site.

This sequence belongs to the GHMP kinase family. Homoserine kinase subfamily.

It is found in the cytoplasm. It carries out the reaction L-homoserine + ATP = O-phospho-L-homoserine + ADP + H(+). It functions in the pathway amino-acid biosynthesis; L-threonine biosynthesis; L-threonine from L-aspartate: step 4/5. Functionally, catalyzes the ATP-dependent phosphorylation of L-homoserine to L-homoserine phosphate. The polypeptide is Homoserine kinase (Xylella fastidiosa (strain M23)).